Here is a 327-residue protein sequence, read N- to C-terminus: tRNA uridine(34) hydroxylase (327 aa).

The Rhodanese domain occupies 130–224 (LDEDTVVLDT…YGKDPEVRGE (95 aa)). Cys-184 (cysteine persulfide intermediate) is an active-site residue.

It belongs to the TrhO family.

The catalysed reaction is uridine(34) in tRNA + AH2 + O2 = 5-hydroxyuridine(34) in tRNA + A + H2O. Functionally, catalyzes oxygen-dependent 5-hydroxyuridine (ho5U) modification at position 34 in tRNAs. The chain is tRNA uridine(34) hydroxylase from Streptococcus suis (strain 98HAH33).